Consider the following 664-residue polypeptide: MVEAKIKALRDELERHNYNYYVLSAPTISDFEFDKMMKELQELEAAHPEFADPDSPTRRVGSDLSKEFEQVVHKYPMLSLGNTYSEDEIRDFYDRTVRSLNEPFEIVAELKYDGTSISLTYEKGRLTRAVTRGDGTRGDDVTANIKTIRSVPLRLRGSDFPEEFEIRGEVLLPWAEFDRLNKEREEQEEPLFANPRNAASGTLKQQNPAIVASRKLDAYFYYLLGENLPAEGHYENLQAARAWGFKIPDVIRKCQSLQDIFDYIAYWDVERKNLPVATDGIVLKVNSLRQQRNLGFTSKSPRWAIAYKFQAERAETRLNSVSFQVGRTGTVTPVANLEPVLLAGTVVKRASLHNADIIEGLDLHIGDQVYVEKGGEIIPKIVGVNVEARSMLMGDKVRFIRVCPECGTPLVRPEGEAAHYCPNESGCPPQIKGRIEHFVTRKAMNINIGPETVEDLYNAGYVKDSADLYTLTVADLLRLERWAEKSAQNLMSSLEESKQVPFERVLFGLGIRFVGETVAKRLVSAFHSIEALEQASLEDLVAVDEIGERIAQSVLSYFSDEKNRTLVNRLKEQGLRMAVSEEQLANRSEKLKGLTIVISGTFSKHSRDEYKAMIEQHGGKNSGSVSGKTDYILAGENMGPAKLEKAAKLGVKIINEDAFLNMLE.

Residues 30 to 34 (DFEFD), 79 to 80 (SL), and Glu-109 each bind NAD(+). The N6-AMP-lysine intermediate role is filled by Lys-111. Arg-132, Glu-169, Lys-284, and Lys-308 together coordinate NAD(+). Zn(2+) is bound by residues Cys-403, Cys-406, Cys-421, and Cys-427. Residues 586–664 (NRSEKLKGLT…NEDAFLNMLE (79 aa)) enclose the BRCT domain.

Belongs to the NAD-dependent DNA ligase family. LigA subfamily. The cofactor is Mg(2+). Requires Mn(2+) as cofactor.

It catalyses the reaction NAD(+) + (deoxyribonucleotide)n-3'-hydroxyl + 5'-phospho-(deoxyribonucleotide)m = (deoxyribonucleotide)n+m + AMP + beta-nicotinamide D-nucleotide.. Functionally, DNA ligase that catalyzes the formation of phosphodiester linkages between 5'-phosphoryl and 3'-hydroxyl groups in double-stranded DNA using NAD as a coenzyme and as the energy source for the reaction. It is essential for DNA replication and repair of damaged DNA. This chain is DNA ligase, found in Parabacteroides distasonis (strain ATCC 8503 / DSM 20701 / CIP 104284 / JCM 5825 / NCTC 11152).